The following is a 649-amino-acid chain: Macrolide export ATP-binding/permease protein MacB 1 (649 aa).

Residues 5-243 (LELEGIRRSY…AAAELMSLTP (239 aa)) enclose the ABC transporter domain. 41 to 48 (GASGSGKS) contributes to the ATP binding site. The next 5 membrane-spanning stretches (helical) occupy residues 274–294 (ALTM…LVVG), 420–440 (VVGQ…VVAE), 524–544 (LFLT…VMNI), 578–598 (VLVC…IGLI), and 608–628 (IAFP…IGVV).

It belongs to the ABC transporter superfamily. Macrolide exporter (TC 3.A.1.122) family. As to quaternary structure, homodimer. Part of the tripartite efflux system MacAB-TolC, which is composed of an inner membrane transporter, MacB, a periplasmic membrane fusion protein, MacA, and an outer membrane component, TolC. The complex forms a large protein conduit and can translocate molecules across both the inner and outer membranes. Interacts with MacA.

Its subcellular location is the cell inner membrane. In terms of biological role, part of the tripartite efflux system MacAB-TolC. MacB is a non-canonical ABC transporter that contains transmembrane domains (TMD), which form a pore in the inner membrane, and an ATP-binding domain (NBD), which is responsible for energy generation. Confers resistance against macrolides. This Yersinia pestis bv. Antiqua (strain Antiqua) protein is Macrolide export ATP-binding/permease protein MacB 1.